Here is a 531-residue protein sequence, read N- to C-terminus: High affinity cysteine transporter (531 aa).

Over methionine 1–lysine 54 the chain is Cytoplasmic. Residues leucine 55–alanine 75 traverse the membrane as a helical segment. Residues threonine 76–asparagine 97 lie on the Lumenal side of the membrane. A helical membrane pass occupies residues threonine 98 to alanine 118. Residues glutamine 119–lysine 120 are Cytoplasmic-facing. A helical transmembrane segment spans residues leucine 121–serine 141. The Lumenal segment spans residues cysteine 142 to arginine 154. Asparagine 146 is a glycosylation site (N-linked (GlcNAc...) asparagine). Residues phenylalanine 155–phenylalanine 175 form a helical membrane-spanning segment. The Cytoplasmic portion of the chain corresponds to phenylalanine 176 to proline 186. A helical transmembrane segment spans residues phenylalanine 187–leucine 207. The Lumenal portion of the chain corresponds to histidine 208 to lysine 218. A helical transmembrane segment spans residues isoleucine 219–phenylalanine 239. The Cytoplasmic portion of the chain corresponds to proline 240–aspartate 285. Residues tyrosine 286–tyrosine 306 traverse the membrane as a helical segment. The Lumenal portion of the chain corresponds to glutamine 307–threonine 324. Residues leucine 325–leucine 345 form a helical membrane-spanning segment. Residues alanine 346–serine 352 are Cytoplasmic-facing. The chain crosses the membrane as a helical span at residues alanine 353–leucine 373. The Lumenal portion of the chain corresponds to proline 374 to lysine 378. Residues isoleucine 379–alanine 399 traverse the membrane as a helical segment. Topologically, residues leucine 400–lysine 413 are cytoplasmic. The helical transmembrane segment at leucine 414–arginine 436 threads the bilayer. At glutamate 437 to tryptophan 447 the chain is on the lumenal side. The chain crosses the membrane as a helical span at residues isoleucine 448–isoleucine 468. Residues leucine 469 to asparagine 498 adopt a coiled-coil conformation. Topologically, residues leucine 469–leucine 531 are cytoplasmic. 2 positions are modified to phosphoserine: serine 500 and serine 501.

It belongs to the major facilitator superfamily. Allantoate permease family.

The protein localises to the cell membrane. Its subcellular location is the endoplasmic reticulum membrane. In terms of biological role, high affinity cysteine-specific transporter. Major contributor to cysteine transport when cysteine, at low concentrations, is provided as the sole sulfur source. The chain is High affinity cysteine transporter (YCT1) from Saccharomyces cerevisiae (strain ATCC 204508 / S288c) (Baker's yeast).